Reading from the N-terminus, the 262-residue chain is Small ribosomal subunit protein eS1z (262 aa).

A compositionally biased stretch (basic residues) spans 1 to 18 (MAVGKNKRISKGRKGGKK). The interval 1–21 (MAVGKNKRISKGRKGGKKKAV) is disordered.

Belongs to the eukaryotic ribosomal protein eS1 family. As to quaternary structure, component of the small ribosomal subunit. Mature ribosomes consist of a small (40S) and a large (60S) subunit. The 40S subunit contains about 33 different proteins and 1 molecule of RNA (18S). The 60S subunit contains about 49 different proteins and 3 molecules of RNA (25S, 5.8S and 5S).

It is found in the cytoplasm. This Arabidopsis thaliana (Mouse-ear cress) protein is Small ribosomal subunit protein eS1z.